We begin with the raw amino-acid sequence, 252 residues long: MKRAVGYGLLFSTVLMTSVVVHLPAQVALSPLPLPEGLELTGIEGTLWQGQAAQVRWQGMSLGDLNWDLHLSALLLGQLEADIRFGRGSSTQLRGKGVVGVGLSGPYADDFLLSLPAAQAITWLPLPVPLMAQGQLEMAVKQYRFGEPYCQQAEGSLAWSAAQLESPIGALQLGTVVSDFTCQESVVTLKGGQKTAQVSSEFNLSLQPDNRYQAQAWFKPEAEFPESLKEQLSWLPQPDGQGRYPFNQQGQL.

Topologically, residues 1–4 (MKRA) are cytoplasmic. Residues 5–25 (VGYGLLFSTVLMTSVVVHLPA) traverse the membrane as a helical segment. Residues 26 to 252 (QVALSPLPLP…RYPFNQQGQL (227 aa)) are Periplasmic-facing.

The protein belongs to the GSP N family.

Its subcellular location is the cell inner membrane. Involved in a type II secretion system (T2SS, formerly general secretion pathway, GSP) for the export of proteins. Required for secretion of cholera toxin through the outer membrane. This chain is Type II secretion system protein N (epsN), found in Vibrio cholerae serotype O1 (strain ATCC 39315 / El Tor Inaba N16961).